The primary structure comprises 160 residues: Glucan endo-1,3-beta-glucosidase, acidic isoform PR-O (160 aa).

Glutamate 81 functions as the Nucleophile in the catalytic mechanism.

The protein belongs to the glycosyl hydrolase 17 family. The N-terminus is blocked.

The protein resides in the secreted. It localises to the extracellular space. It catalyses the reaction Hydrolysis of (1-&gt;3)-beta-D-glucosidic linkages in (1-&gt;3)-beta-D-glucans.. In terms of biological role, implicated in the defense of plants against pathogens. This Nicotiana tabacum (Common tobacco) protein is Glucan endo-1,3-beta-glucosidase, acidic isoform PR-O (PR0).